The following is a 356-amino-acid chain: sn-glycerol-3-phosphate import ATP-binding protein UgpC (356 aa).

Residues 4-235 (LKLQAVTKSW…PASRFVASFI (232 aa)) enclose the ABC transporter domain. 37-44 (GPSGCGKS) provides a ligand contact to ATP.

The protein belongs to the ABC transporter superfamily. sn-glycerol-3-phosphate importer (TC 3.A.1.1.3) family. The complex is composed of two ATP-binding proteins (UgpC), two transmembrane proteins (UgpA and UgpE) and a solute-binding protein (UgpB).

Its subcellular location is the cell inner membrane. It carries out the reaction sn-glycerol 3-phosphate(out) + ATP + H2O = sn-glycerol 3-phosphate(in) + ADP + phosphate + H(+). In terms of biological role, part of the ABC transporter complex UgpBAEC involved in sn-glycerol-3-phosphate (G3P) import. Responsible for energy coupling to the transport system. This chain is sn-glycerol-3-phosphate import ATP-binding protein UgpC, found in Salmonella typhi.